We begin with the raw amino-acid sequence, 118 residues long: UPF0102 protein Dtur_1530 (118 aa).

It belongs to the UPF0102 family.

The chain is UPF0102 protein Dtur_1530 from Dictyoglomus turgidum (strain DSM 6724 / Z-1310).